A 336-amino-acid polypeptide reads, in one-letter code: Cell division protein ZipA (336 aa).

The Periplasmic segment spans residues 1 to 6; the sequence is MMQDLR. Residues 7 to 27 form a helical membrane-spanning segment; sequence LILIVVGAIAIIALLLHGLWT. The Cytoplasmic segment spans residues 28-336; it reads SRKERSSLFR…RIRDVLKANA (309 aa). Residues 40-51 show a composition bias toward basic and acidic residues; that stretch reads PVKRAKKARDET. Residues 40–190 form a disordered region; sequence PVKRAKKARD…APAQPQQPAE (151 aa). Residues 76 to 89 are compositionally biased toward low complexity; that stretch reads SFSSSSFDNASFDN. Positions 126 to 138 are enriched in polar residues; that stretch reads PRSQVRGDSNPQV. Over residues 179-190 the composition is skewed to low complexity; sequence QPAPAQPQQPAE.

This sequence belongs to the ZipA family. As to quaternary structure, interacts with FtsZ via their C-terminal domains.

It localises to the cell inner membrane. Functionally, essential cell division protein that stabilizes the FtsZ protofilaments by cross-linking them and that serves as a cytoplasmic membrane anchor for the Z ring. Also required for the recruitment to the septal ring of downstream cell division proteins. The sequence is that of Cell division protein ZipA from Pectobacterium carotovorum subsp. carotovorum (strain PC1).